The sequence spans 215 residues: Large ribosomal subunit protein eL14 (215 aa).

Lys-79 is modified (N6-acetyllysine). Lys-85 bears the N6-acetyllysine; alternate mark. Lys-85 carries the post-translational modification N6-succinyllysine; alternate. Residue Lys-124 forms a Glycyl lysine isopeptide (Lys-Gly) (interchain with G-Cter in SUMO2) linkage. Ser-139 is modified (phosphoserine). Residues 161–215 (VPAKKITAASKKAPAQKVPAQKATGQKAAPAPKAQKGQKAPAQKAPAPKASGKKA) are disordered. 6 repeat units span residues 171–175 (KKAPA), 176–180 (QKVPA), 181–185 (QKATG), 186–190 (QKAAP), 193–195 (KAQ), and 196–198 (KGQ). Residues 171–190 (KKAPAQKVPAQKATGQKAAP) are 4 X 5 AA tandem repeats of Q-K-A-[PAS]-X. Positions 193-198 (KAQKGQ) are 2 X 3 AA tandem repeats of K-[GA]-Q. Lys-204 carries the post-translational modification N6-succinyllysine.

It belongs to the eukaryotic ribosomal protein eL14 family. Component of the large ribosomal subunit.

The protein resides in the cytoplasm. In terms of biological role, component of the large ribosomal subunit. The ribosome is a large ribonucleoprotein complex responsible for the synthesis of proteins in the cell. In Homo sapiens (Human), this protein is Large ribosomal subunit protein eL14 (RPL14).